The chain runs to 59 residues: Ribosome biogenesis protein Nop10 (59 aa).

Belongs to the NOP10 family.

Its function is as follows. Involved in ribosome biogenesis; more specifically in 18S rRNA pseudouridylation and in cleavage of pre-rRNA. The protein is Ribosome biogenesis protein Nop10 of Thermococcus gammatolerans (strain DSM 15229 / JCM 11827 / EJ3).